The primary structure comprises 771 residues: Myotubularin-related protein 10 (771 aa).

A Myotubularin phosphatase domain is found at 217-657 (FETYSDWDRE…THIKLWKLCY (441 aa)). Phosphoserine occurs at positions 603 and 745.

It belongs to the protein-tyrosine phosphatase family. Non-receptor class myotubularin subfamily.

This Mus musculus (Mouse) protein is Myotubularin-related protein 10 (Mtmr10).